The chain runs to 599 residues: Sodium-dependent phosphate transport protein 2C (599 aa).

The Cytoplasmic portion of the chain corresponds to 1 to 76 (MPSSLPGSQV…RRVAGSVLKA (76 aa)). Serine 4 is subject to Phosphoserine. The helical transmembrane segment at 77 to 97 (CGLLGSLYFFICSLDVLSSAF) threads the bilayer. Residues 98–111 (QLLGSKVAGDIFKD) lie on the Extracellular side of the membrane. A helical transmembrane segment spans residues 112–132 (NVVLSNPVAGLVIGVLVTALV). At 133–188 (QSSSTSSSIVVSMVAAKLLTVRVSVPIIMGVNVGTSITSTLVSMAQSGDRDEFQRA) the chain is on the cytoplasmic side. A helical transmembrane segment spans residues 189 to 209 (FSGSAVHGIFNWLTVLVLLPL). Over 210 to 322 (ESATALLERL…FAGTELTDLA (113 aa)) the chain is Extracellular. N-linked (GlcNAc...) asparagine glycans are attached at residues asparagine 265, asparagine 268, asparagine 286, and asparagine 299. A disulfide bond links cysteine 276 and cysteine 309. Residues 323-343 (VGCILLAGSLLVLCGCLVLIV) form a helical membrane-spanning segment. The Cytoplasmic portion of the chain corresponds to 344 to 367 (KLLNSVLRGRVAQVVRTVINADFP). Residues 368–388 (FPLGWLGGYLAVLAGAGLTFA) form a helical membrane-spanning segment. The Extracellular segment spans residues 389 to 445 (LQSSSVFTAAVVPLMGVGVISLDRAYPLLLGSNIGTTTTALLAALASPADRMLSALQ). A helical membrane pass occupies residues 446 to 466 (VALIHFFFNLAGILLWYLVPA). At 467-485 (LRLPIPLARHFGVVTARYR) the chain is on the cytoplasmic side. A helical membrane pass occupies residues 486 to 506 (WVAGVYLLLGFLLLPLAAFGL). The Extracellular portion of the chain corresponds to 507–510 (SLAG). The chain crosses the membrane as a helical span at residues 511–531 (GMELAAVGGPLVGLVLLVILV). The Cytoplasmic portion of the chain corresponds to 532-599 (TVLQRRRPAW…NPEILASQQL (68 aa)).

The protein belongs to the SLC34A transporter family. As to expression, expressed only in the kidney.

The protein localises to the apical cell membrane. It carries out the reaction 2 Na(+)(out) + phosphate(out) = 2 Na(+)(in) + phosphate(in). Involved in actively transporting phosphate into cells via Na(+) cotransport in the renal brush border membrane. The cotransport has a Na(+):Pi stoichiometry of 2:1 and is electroneutral. This chain is Sodium-dependent phosphate transport protein 2C (SLC34A3), found in Homo sapiens (Human).